A 370-amino-acid chain; its full sequence is Coproporphyrin III ferrochelatase (370 aa).

Fe-coproporphyrin III contacts are provided by Ser58 and Tyr127. Residues His189 and Glu276 each coordinate Fe(2+).

This sequence belongs to the ferrochelatase family.

The protein resides in the cytoplasm. It catalyses the reaction Fe-coproporphyrin III + 2 H(+) = coproporphyrin III + Fe(2+). The protein operates within porphyrin-containing compound metabolism; protoheme biosynthesis. Functionally, involved in coproporphyrin-dependent heme b biosynthesis. Catalyzes the insertion of ferrous iron into coproporphyrin III to form Fe-coproporphyrin III. In Corynebacterium glutamicum (strain ATCC 13032 / DSM 20300 / JCM 1318 / BCRC 11384 / CCUG 27702 / LMG 3730 / NBRC 12168 / NCIMB 10025 / NRRL B-2784 / 534), this protein is Coproporphyrin III ferrochelatase.